A 227-amino-acid polypeptide reads, in one-letter code: Protein Saci_0792 (227 aa).

The region spanning 15 to 209 (DIGKQLIKIA…EINKNTDEII (195 aa)) is the AMMECR1 domain.

The protein is Protein Saci_0792 of Sulfolobus acidocaldarius (strain ATCC 33909 / DSM 639 / JCM 8929 / NBRC 15157 / NCIMB 11770).